The primary structure comprises 78 residues: Acyl carrier protein (78 aa).

A Carrier domain is found at 1–76 (MSVAEKVKEI…DAISFIEKKK (76 aa)). Serine 36 bears the O-(pantetheine 4'-phosphoryl)serine mark.

The protein belongs to the acyl carrier protein (ACP) family. In terms of processing, 4'-phosphopantetheine is transferred from CoA to a specific serine of apo-ACP by AcpS. This modification is essential for activity because fatty acids are bound in thioester linkage to the sulfhydryl of the prosthetic group.

It localises to the cytoplasm. Its pathway is lipid metabolism; fatty acid biosynthesis. Its function is as follows. Carrier of the growing fatty acid chain in fatty acid biosynthesis. The polypeptide is Acyl carrier protein (Solidesulfovibrio magneticus (strain ATCC 700980 / DSM 13731 / RS-1) (Desulfovibrio magneticus)).